The chain runs to 249 residues: Ribitol 2-dehydrogenase (249 aa).

20 to 43 is an NAD(+) binding site; sequence TGAASGIGLECARTLLGAGAKVVL. The active-site Proton acceptor is tyrosine 160.

It belongs to the short-chain dehydrogenases/reductases (SDR) family. Homotetramer.

The enzyme catalyses ribitol + NAD(+) = D-ribulose + NADH + H(+). In Klebsiella aerogenes (Enterobacter aerogenes), this protein is Ribitol 2-dehydrogenase (rbtD).